The chain runs to 183 residues: Archaemetzincin (183 aa).

Residue H131 coordinates Zn(2+). Residue E132 is the Proton acceptor of the active site. Positions 135, 141, 142, 147, and 166 each coordinate Zn(2+).

Belongs to the peptidase M54 family. In terms of assembly, monomer. The cofactor is Zn(2+).

Probable zinc metalloprotease whose natural substrate is unknown. The chain is Archaemetzincin from Saccharolobus solfataricus (strain ATCC 35092 / DSM 1617 / JCM 11322 / P2) (Sulfolobus solfataricus).